Here is a 176-residue protein sequence, read N- to C-terminus: Zinc finger protein 428 (176 aa).

Residues 1-152 (MTETREPTET…EEEGGTYHCT (152 aa)) form a disordered region. Residues 16–46 (LEEDDEDLSPEPDSEEEEEEEEEETTDDPEY) show a composition bias toward acidic residues. Thr-96 carries the post-translational modification Phosphothreonine. A compositionally biased stretch (basic and acidic residues) spans 126–138 (PSRTGETRPAGRD). The segment at 149–171 (YHCTECEDSFDNLGELHGHFMLH) adopts a C2H2-type zinc-finger fold.

This is Zinc finger protein 428 (Znf428) from Mus musculus (Mouse).